We begin with the raw amino-acid sequence, 486 residues long: Siroheme synthase (486 aa).

Residues M1–V204 form a precorrin-2 dehydrogenase /sirohydrochlorin ferrochelatase region. NAD(+) contacts are provided by residues H22–I23 and E43–K44. At S128 the chain carries Phosphoserine. The uroporphyrinogen-III C-methyltransferase stretch occupies residues G216–A486. Position 225 (P225) interacts with S-adenosyl-L-methionine. The active-site Proton acceptor is the D248. The Proton donor role is filled by K270. S-adenosyl-L-methionine-binding positions include G301–D303, V306, T331–A332, M383, and G412.

It in the N-terminal section; belongs to the precorrin-2 dehydrogenase / sirohydrochlorin ferrochelatase family. In the C-terminal section; belongs to the precorrin methyltransferase family.

The catalysed reaction is uroporphyrinogen III + 2 S-adenosyl-L-methionine = precorrin-2 + 2 S-adenosyl-L-homocysteine + H(+). It carries out the reaction precorrin-2 + NAD(+) = sirohydrochlorin + NADH + 2 H(+). It catalyses the reaction siroheme + 2 H(+) = sirohydrochlorin + Fe(2+). It functions in the pathway cofactor biosynthesis; adenosylcobalamin biosynthesis; precorrin-2 from uroporphyrinogen III: step 1/1. The protein operates within cofactor biosynthesis; adenosylcobalamin biosynthesis; sirohydrochlorin from precorrin-2: step 1/1. It participates in porphyrin-containing compound metabolism; siroheme biosynthesis; precorrin-2 from uroporphyrinogen III: step 1/1. Its pathway is porphyrin-containing compound metabolism; siroheme biosynthesis; siroheme from sirohydrochlorin: step 1/1. It functions in the pathway porphyrin-containing compound metabolism; siroheme biosynthesis; sirohydrochlorin from precorrin-2: step 1/1. Multifunctional enzyme that catalyzes the SAM-dependent methylations of uroporphyrinogen III at position C-2 and C-7 to form precorrin-2 via precorrin-1. Then it catalyzes the NAD-dependent ring dehydrogenation of precorrin-2 to yield sirohydrochlorin. Finally, it catalyzes the ferrochelation of sirohydrochlorin to yield siroheme. The sequence is that of Siroheme synthase from Actinobacillus pleuropneumoniae serotype 3 (strain JL03).